The sequence spans 770 residues: Potassium transporter 25 (770 aa).

Topologically, residues 1-23 (MDLEAAHGAAAAPGKRRRRARES) are cytoplasmic. Residues 24–44 (WGASLLLAYQSLGVVYGDVAT) form a helical membrane-spanning segment. Over 45-70 (SPLYVYKSAFAGDDIQHSAGNEEIYG) the chain is Extracellular. A helical membrane pass occupies residues 71-91 (VLSFVFWTLTLISLVKYVLIV). Topologically, residues 92-152 (LRADDGGEGG…MLERYRVLQR (61 aa)) are cytoplasmic. The chain crosses the membrane as a helical span at residues 153 to 173 (LLLLFALLGTCMVIGDGVLTP). Residues 174–194 (AVSVYSAVSGLELSMEHEHHK) are Extracellular-facing. A helical membrane pass occupies residues 195–215 (YVQLPVTCAILIGLFALQHYG). Residues 216–218 (THR) are Cytoplasmic-facing. A helical transmembrane segment spans residues 219–239 (VGFIFAPIVCVWLLCISAIGV). Over 240–267 (YNIVHWNHHVYRALSPYYMYQFLKKTQT) the chain is Extracellular. A helical transmembrane segment spans residues 268-288 (GGWMSLGGILLCVTGSEAMYA). At 289-299 (DLGHFSQSSIK) the chain is on the cytoplasmic side. Residues 300–320 (IAFMSVVYPALVLAYMGQAAY) traverse the membrane as a helical segment. Residues 321-346 (ISQHHSFENAYHIGFYVSVPEKLRWP) are Extracellular-facing. The helical transmembrane segment at 347–367 (VLVIAILAAVVGSQAVITGTF) threads the bilayer. Residues 368-394 (SIIKQCSSLSCFPGVKIVHTSSTVHGQ) are Cytoplasmic-facing. The helical transmembrane segment at 395-415 (IYIPEINWILMILCLAVTLGF) threads the bilayer. The Extracellular segment spans residues 416-425 (RNTKHLANAQ). A helical transmembrane segment spans residues 426-446 (GLAVITVMLVTTCLMSLVIVL). The Cytoplasmic segment spans residues 447 to 451 (CWNKS). A helical membrane pass occupies residues 452 to 472 (IFLALGFLIFFGTIEVLYFSA). The Extracellular portion of the chain corresponds to 473–479 (SLVKFHE). Residues 480–500 (GAWVPITLSFIFMIVMCVWHY) form a helical membrane-spanning segment. The Cytoplasmic portion of the chain corresponds to 501–770 (GTIKKYEFDF…TLEVGMVYQV (270 aa)).

Belongs to the HAK/KUP transporter (TC 2.A.72.3) family.

The protein localises to the membrane. Its function is as follows. High-affinity potassium transporter. The polypeptide is Potassium transporter 25 (HAK25) (Oryza sativa subsp. japonica (Rice)).